The primary structure comprises 132 residues: Small ribosomal subunit protein uS8 (132 aa).

This sequence belongs to the universal ribosomal protein uS8 family. In terms of assembly, part of the 30S ribosomal subunit. Contacts proteins S5 and S12.

Its function is as follows. One of the primary rRNA binding proteins, it binds directly to 16S rRNA central domain where it helps coordinate assembly of the platform of the 30S subunit. The sequence is that of Small ribosomal subunit protein uS8 from Leuconostoc citreum (strain KM20).